A 361-amino-acid polypeptide reads, in one-letter code: Terpene synthase 6 (361 aa).

The short motif at 81-86 (DDVLDA) is the DDxx(x)D/E motif element. The NDxxSxxxD/E motif motif lies at 223-231 (NDLVSYEKE).

It belongs to the terpene synthase family.

The enzyme catalyses (2E,6E)-farnesyl diphosphate = (2S,3R,6S,9S)-(-)-protoillud-7-ene + diphosphate. In terms of biological role, terpene synthase that converts its substrate farnesyl diphosphate (FPP) into the sesquiterpene (2S,3R,6S,9S)-(-)-protoillud-7-ene. This Dictyostelium discoideum (Social amoeba) protein is Terpene synthase 6.